A 358-amino-acid polypeptide reads, in one-letter code: Protein RecA (358 aa).

ATP is bound at residue 76 to 83 (GPESSGKT).

This sequence belongs to the RecA family.

Its subcellular location is the cytoplasm. Can catalyze the hydrolysis of ATP in the presence of single-stranded DNA, the ATP-dependent uptake of single-stranded DNA by duplex DNA, and the ATP-dependent hybridization of homologous single-stranded DNAs. It interacts with LexA causing its activation and leading to its autocatalytic cleavage. The chain is Protein RecA from Rhodospirillum centenum (strain ATCC 51521 / SW).